The chain runs to 197 residues: Cell division protein SepF (197 aa).

A disordered region spans residues 15 to 89 (EEEEVEGPEE…RMNNNSKNNS (75 aa)). Over residues 22–42 (PEERESSRSRERVQEREDYNR) the composition is skewed to basic and acidic residues. The segment covering 43-73 (NENQATPQTFNNKQQAIKSVPQKNTLRSNTT) has biased composition (polar residues). The segment covering 80-89 (RMNNNSKNNS) has biased composition (low complexity).

The protein belongs to the SepF family. As to quaternary structure, homodimer. Interacts with FtsZ.

It is found in the cytoplasm. Its function is as follows. Cell division protein that is part of the divisome complex and is recruited early to the Z-ring. Probably stimulates Z-ring formation, perhaps through the cross-linking of FtsZ protofilaments. Its function overlaps with FtsA. The chain is Cell division protein SepF from Staphylococcus epidermidis (strain ATCC 35984 / DSM 28319 / BCRC 17069 / CCUG 31568 / BM 3577 / RP62A).